The sequence spans 842 residues: Glycogen phosphorylase, muscle form (842 aa).

Ser2 is modified (N-acetylserine). Position 15 is a phosphoserine; by PHK; in form phosphorylase A (Ser15). A Phosphoserine modification is found at Ser26. AMP-binding residues include Asp43 and Tyr76. Phosphotyrosine occurs at positions 204 and 227. 310–319 (RRFKSSKFGC) contacts AMP. At Ser430 the chain carries Phosphoserine. Residue Tyr473 is modified to Phosphotyrosine. Position 514 is a phosphoserine (Ser514). N6-(pyridoxal phosphate)lysine is present on Lys681. Ser747 and Ser748 each carry phosphoserine.

This sequence belongs to the glycogen phosphorylase family. As to quaternary structure, homodimer. Homotetramer; to form the enzymatically active phosphorylase A. It depends on pyridoxal 5'-phosphate as a cofactor. In terms of processing, phosphorylation of Ser-15 converts phosphorylase B (unphosphorylated) to phosphorylase A.

It carries out the reaction [(1-&gt;4)-alpha-D-glucosyl](n) + phosphate = [(1-&gt;4)-alpha-D-glucosyl](n-1) + alpha-D-glucose 1-phosphate. With respect to regulation, allosterically regulated through the non-covalent binding of metabolites, being activated by AMP and inhibited by ATP, ADP, and glucose-6-phosphate. The activity is also controlled by post-translational modifications including phosphorylation. Functionally, allosteric enzyme that catalyzes the rate-limiting step in glycogen catabolism, the phosphorolytic cleavage of glycogen to produce glucose-1-phosphate, and plays a central role in maintaining cellular and organismal glucose homeostasis. This is Glycogen phosphorylase, muscle form from Rattus norvegicus (Rat).